Here is a 371-residue protein sequence, read N- to C-terminus: Bifunctional enzyme IspD/IspF (371 aa).

The 2-C-methyl-D-erythritol 4-phosphate cytidylyltransferase stretch occupies residues 1 to 210; it reads MSEISLIMLA…LDLPKPSFEI (210 aa). The interval 211–371 is 2-C-methyl-D-erythritol 2,4-cyclodiphosphate synthase; the sequence is FTGNGFDVHE…NLKYFDWTRL (161 aa). Aspartate 217 and histidine 219 together coordinate a divalent metal cation. 4-CDP-2-C-methyl-D-erythritol 2-phosphate is bound by residues 217 to 219 and 243 to 244; these read DVH and HS. Histidine 251 contacts a divalent metal cation. 4-CDP-2-C-methyl-D-erythritol 2-phosphate is bound by residues 265-267, 270-274, 341-344, phenylalanine 348, and arginine 351; these read DIG, YPDTD, and TTTE.

This sequence in the N-terminal section; belongs to the IspD/TarI cytidylyltransferase family. IspD subfamily. It in the C-terminal section; belongs to the IspF family. A divalent metal cation serves as cofactor.

The catalysed reaction is 2-C-methyl-D-erythritol 4-phosphate + CTP + H(+) = 4-CDP-2-C-methyl-D-erythritol + diphosphate. The enzyme catalyses 4-CDP-2-C-methyl-D-erythritol 2-phosphate = 2-C-methyl-D-erythritol 2,4-cyclic diphosphate + CMP. The protein operates within isoprenoid biosynthesis; isopentenyl diphosphate biosynthesis via DXP pathway; isopentenyl diphosphate from 1-deoxy-D-xylulose 5-phosphate: step 2/6. It participates in isoprenoid biosynthesis; isopentenyl diphosphate biosynthesis via DXP pathway; isopentenyl diphosphate from 1-deoxy-D-xylulose 5-phosphate: step 4/6. Bifunctional enzyme that catalyzes the formation of 4-diphosphocytidyl-2-C-methyl-D-erythritol from CTP and 2-C-methyl-D-erythritol 4-phosphate (MEP) (IspD), and catalyzes the conversion of 4-diphosphocytidyl-2-C-methyl-D-erythritol 2-phosphate (CDP-ME2P) to 2-C-methyl-D-erythritol 2,4-cyclodiphosphate (ME-CPP) with a corresponding release of cytidine 5-monophosphate (CMP) (IspF). In Campylobacter jejuni subsp. doylei (strain ATCC BAA-1458 / RM4099 / 269.97), this protein is Bifunctional enzyme IspD/IspF.